Here is a 122-residue protein sequence, read N- to C-terminus: Basic phospholipase A2 CbII (122 aa).

7 disulfides stabilise this stretch: C26/C115, C28/C44, C43/C95, C49/C122, C50/C88, C57/C81, and C75/C86. Ca(2+) is bound by residues Y27, G29, and G31. H47 is an active-site residue. D48 lines the Ca(2+) pocket. Residue D89 is part of the active site.

Belongs to the phospholipase A2 family. Group I subfamily. D49 sub-subfamily. In terms of assembly, heterodimer of an acidic subunit (CbIalpha or CbIbeta) and a basic subunit (CbII). The acidic subunit is non-toxic, and increases the toxicity of the basic subunit. Ca(2+) is required as a cofactor. As to expression, expressed by the venom gland.

The protein localises to the secreted. The catalysed reaction is a 1,2-diacyl-sn-glycero-3-phosphocholine + H2O = a 1-acyl-sn-glycero-3-phosphocholine + a fatty acid + H(+). Heterodimer: presynaptic neurotoxin. Its function is as follows. Monomer: Snake venom phospholipase A2 (PLA2) that exhibits strong anticoagulant effects by binding to factor Xa (F10) and inhibiting the prothrombinase activity (IC(50) is 20 nM). PLA2 catalyzes the calcium-dependent hydrolysis of the 2-acyl groups in 3-sn-phosphoglycerides. This chain is Basic phospholipase A2 CbII, found in Pseudocerastes fieldi (Field's horned viper).